Here is a 420-residue protein sequence, read N- to C-terminus: ATP phosphoribosyltransferase regulatory subunit (420 aa).

Belongs to the class-II aminoacyl-tRNA synthetase family. HisZ subfamily. In terms of assembly, heteromultimer composed of HisG and HisZ subunits.

The protein localises to the cytoplasm. It functions in the pathway amino-acid biosynthesis; L-histidine biosynthesis; L-histidine from 5-phospho-alpha-D-ribose 1-diphosphate: step 1/9. Functionally, required for the first step of histidine biosynthesis. May allow the feedback regulation of ATP phosphoribosyltransferase activity by histidine. The protein is ATP phosphoribosyltransferase regulatory subunit of Bacillus cereus (strain B4264).